Here is a 157-residue protein sequence, read N- to C-terminus: Endoribonuclease YbeY (157 aa).

Zn(2+) contacts are provided by His-123, His-127, and His-133.

It belongs to the endoribonuclease YbeY family. Zn(2+) serves as cofactor.

It is found in the cytoplasm. Functionally, single strand-specific metallo-endoribonuclease involved in late-stage 70S ribosome quality control and in maturation of the 3' terminus of the 16S rRNA. The sequence is that of Endoribonuclease YbeY from Limosilactobacillus fermentum (strain NBRC 3956 / LMG 18251) (Lactobacillus fermentum).